The primary structure comprises 266 residues: Proliferating cell nuclear antigen (266 aa).

Residues 61-80 (RCDRNLSMGMNLNNMAKMLK) mediate DNA binding.

The protein belongs to the PCNA family.

The protein localises to the nucleus. Its function is as follows. This protein is an auxiliary protein of DNA polymerase delta and is involved in the control of eukaryotic DNA replication by increasing the polymerase's processibility during elongation of the leading strand. This Pisum sativum (Garden pea) protein is Proliferating cell nuclear antigen (PCNA).